Consider the following 574-residue polypeptide: Frizzled-7 (574 aa).

Residues 1–32 (MRDPGAAAPLSSLGLCALVLALLGALSAGAGA) form the signal peptide. Topologically, residues 33–256 (QPYHGEKGIS…EEERRFARLW (224 aa)) are extracellular. The FZ domain occupies 44–163 (PDHGFCQPIS…HGAGEICVGQ (120 aa)). 5 cysteine pairs are disulfide-bonded: Cys49/Cys110, Cys57/Cys103, Cys94/Cys131, Cys120/Cys160, and Cys124/Cys148. N-linked (GlcNAc...) asparagine glycosylation occurs at Asn63. Residue Asn164 is glycosylated (N-linked (GlcNAc...) asparagine). Residues 257–277 (VGVWSVLCCASTLFTVLTYLV) form a helical membrane-spanning segment. The Cytoplasmic segment spans residues 278-288 (DMRRFSYPERP). Residues 289–309 (IIFLSGCYFMVAVAHVAGFLL) traverse the membrane as a helical segment. Over 310–336 (EDRAVCVERFSDDGYRTVAQGTKKEGC) the chain is Extracellular. The helical transmembrane segment at 337–357 (TILFMVLYFFGMASSIWWVIL) threads the bilayer. The Cytoplasmic portion of the chain corresponds to 358 to 379 (SLTWFLAAGMKWGHEAIEANSQ). A helical transmembrane segment spans residues 380–400 (YFHLAAWAVPAVKTITILAMG). Residues 401 to 423 (QVDGDLLSGVCYVGLSSVDALRG) are Extracellular-facing. A helical membrane pass occupies residues 424–444 (FVLAPLFVYLFIGTSFLLAGF). Residues 445–470 (VSLFRIRTIMKHDGTKTEKLEKLMVR) lie on the Cytoplasmic side of the membrane. The helical transmembrane segment at 471 to 491 (IGVFSVLYTVPATIVLACYFY) threads the bilayer. Residues 492–528 (EQAFREHWERTWLLQTCKSYAVPCPPGHFPPMSPDFT) lie on the Extracellular side of the membrane. Residues 529 to 549 (VFMIKYLMTMIVGITTGFWIW) form a helical membrane-spanning segment. The Cytoplasmic segment spans residues 550 to 574 (SGKTLQSWRRFYHRLSHSSKGETAV). The short motif at 552-557 (KTLQSW) is the Lys-Thr-X-X-X-Trp motif, mediates interaction with the PDZ domain of Dvl family members element. A PDZ-binding motif is present at residues 572–574 (TAV).

This sequence belongs to the G-protein coupled receptor Fz/Smo family. In terms of assembly, interacts with MAGI3. Interacts with DVL1. Interacts with CCDC88C/DAPLE; the interaction displaces DVL1 from FZD7, leading to inhibition of canonical Wnt signaling and triggering of non-canonical Wnt responses. Interacts with MYOC. Binds to SDCBP; this interaction is increased by inositol trisphosphate (IP3). Interacts with glypican GPC3. As to quaternary structure, (Microbial infection) Interacts with C.difficile toxin TcdB; frizzled receptors constitute the major host receptors for TcdB in the colonic epithelium. In terms of processing, ubiquitinated by ZNRF3, leading to its degradation by the proteasome. In terms of tissue distribution, high expression in adult skeletal muscle and fetal kidney, followed by fetal lung, adult heart, brain, and placenta. Specifically expressed in squamous cell esophageal carcinomas.

It is found in the cell membrane. The protein resides in the endosome membrane. Its function is as follows. Receptor for Wnt proteins. Most frizzled receptors are coupled to the beta-catenin canonical signaling pathway, which leads to the activation of disheveled proteins, inhibition of GSK-3 kinase, nuclear accumulation of beta-catenin and activation of Wnt target genes. A second signaling pathway involving PKC and calcium fluxes has been seen for some family members, but it is not yet clear if it represents a distinct pathway or if it can be integrated in the canonical pathway, as PKC seems to be required for Wnt-mediated inactivation of GSK-3 kinase. Both pathways seem to involve interactions with G-proteins. Activation by WNT8 induces expression of beta-catenin target genes. Following ligand activation, binds to CCDC88C/DAPLE which displaces DVL1 from FZD7 and leads to inhibition of canonical Wnt signaling, activation of G-proteins by CCDC88C and triggering of non-canonical Wnt responses. May be involved in transduction and intercellular transmission of polarity information during tissue morphogenesis and/or in differentiated tissues. In terms of biological role, (Microbial infection) Acts as a receptor for C.difficile toxin TcdB in the colonic epithelium. This chain is Frizzled-7 (FZD7), found in Homo sapiens (Human).